The primary structure comprises 286 residues: Diaminopimelate epimerase (286 aa).

Substrate is bound by residues N13 and N66. C75 functions as the Proton donor in the catalytic mechanism. Substrate-binding positions include 76–77, N165, N198, and 216–217; these read GN and ER. The Proton acceptor role is filled by C225. Residue 226 to 227 participates in substrate binding; the sequence is GT.

Belongs to the diaminopimelate epimerase family. As to quaternary structure, homodimer.

The protein resides in the cytoplasm. The enzyme catalyses (2S,6S)-2,6-diaminopimelate = meso-2,6-diaminopimelate. The protein operates within amino-acid biosynthesis; L-lysine biosynthesis via DAP pathway; DL-2,6-diaminopimelate from LL-2,6-diaminopimelate: step 1/1. Its function is as follows. Catalyzes the stereoinversion of LL-2,6-diaminopimelate (L,L-DAP) to meso-diaminopimelate (meso-DAP), a precursor of L-lysine and an essential component of the bacterial peptidoglycan. This Oceanobacillus iheyensis (strain DSM 14371 / CIP 107618 / JCM 11309 / KCTC 3954 / HTE831) protein is Diaminopimelate epimerase.